The sequence spans 469 residues: Putative F-box/LRR-repeat protein At5g02930 (469 aa).

One can recognise an F-box domain in the interval 27–77 (VDSISDLPDAVLQHIFSYIPTELAIRTSVLSKRWRHVWSETPHLSFEWLKV). LRR repeat units lie at residues 30 to 58 (ISDL…VLSK), 178 to 203 (DCTM…SLKF), 204 to 214 (CMSLKYLNLSK), 223 to 250 (IERI…RLRD), 296 to 321 (TMLK…SLSK), and 341 to 366 (IIRS…TVYT).

This Arabidopsis thaliana (Mouse-ear cress) protein is Putative F-box/LRR-repeat protein At5g02930.